Reading from the N-terminus, the 141-residue chain is MAKKGAGATRGISPVRPTRAIPIGAYLTVADNSGAKVIQVIGVVEYHGTRRRLASAGVGDMVVATVKKGRPDMRHQVVRAVIIRQRKEYRRLDGMRVKFEDNAAVIVTPEGVPRGTEIRGPVAREAAEKWVRIGSIASIIV.

The protein belongs to the universal ribosomal protein uL14 family. As to quaternary structure, part of the 50S ribosomal subunit. Forms a cluster with proteins L3 and L24e, part of which may contact the 16S rRNA in 2 intersubunit bridges.

In terms of biological role, binds to 23S rRNA. Forms part of two intersubunit bridges in the 70S ribosome. In Pyrococcus horikoshii (strain ATCC 700860 / DSM 12428 / JCM 9974 / NBRC 100139 / OT-3), this protein is Large ribosomal subunit protein uL14.